Reading from the N-terminus, the 225-residue chain is Germin-like protein 8-3 (225 aa).

An N-terminal signal peptide occupies residues 1–23; that stretch reads MASSSLFLLASLLVLASWQQAIA. Cysteine 33 and cysteine 48 are oxidised to a cystine. 2 N-linked (GlcNAc...) asparagine glycosylation sites follow: asparagine 53 and asparagine 78. Positions 60–213 constitute a Cupin type-1 domain; sequence FNAAKFDMPR…AFQVEKKVID (154 aa). Mn(2+)-binding residues include histidine 111, histidine 113, glutamate 118, and histidine 158.

Belongs to the germin family. As to quaternary structure, oligomer (believed to be a pentamer but probably hexamer).

Its subcellular location is the secreted. It localises to the extracellular space. The protein localises to the apoplast. Plays a role in broad-spectrum disease resistance. Probably has no oxalate oxidase activity even if the active site is conserved. This chain is Germin-like protein 8-3 (GER2), found in Oryza sativa subsp. japonica (Rice).